The primary structure comprises 222 residues: Interleukin-12 subunit alpha (222 aa).

Positions 1-25 (MCPPRGLLLVAILVLLNHLDHLSLA) are cleaved as a signal peptide. Intrachain disulfides connect C40-C113, C67-C199, and C88-C126. N-linked (GlcNAc...) asparagine glycosylation is found at N42, N96, and N110.

The protein belongs to the IL-6 superfamily. In terms of assembly, heterodimer with IL12B; disulfide-linked. This heterodimer is known as interleukin IL-12. Heterodimer with EBI3/IL27B; not disulfide-linked. This heterodimer is known as interleukin IL-35. Interacts with NBR1; this interaction promotes IL-12 secretion.

It localises to the secreted. Its function is as follows. Heterodimerizes with IL12B to form the IL-12 cytokine or with EBI3/IL27B to form the IL-35 cytokine. IL-12 is primarily produced by professional antigen-presenting cells (APCs) such as B-cells and dendritic cells (DCs) as well as macrophages and granulocytes and regulates T-cell and natural killer-cell responses, induces the production of interferon-gamma (IFN-gamma), favors the differentiation of T-helper 1 (Th1) cells and is an important link between innate resistance and adaptive immunity. Mechanistically, exerts its biological effects through a receptor composed of IL12R1 and IL12R2 subunits. Binding to the receptor results in the rapid tyrosine phosphorylation of a number of cellular substrates including the JAK family kinases TYK2 and JAK2. In turn, recruited STAT4 gets phosphorylated and translocates to the nucleus where it regulates cytokine/growth factor responsive genes. As part of IL-35, plays essential roles in maintaining the immune homeostasis of the liver microenvironment and also functions as an immune-suppressive cytokine. Mediates biological events through unconventional receptors composed of IL12RB2 and gp130/IL6ST heterodimers or homodimers. Signaling requires the transcription factors STAT1 and STAT4, which form a unique heterodimer that binds to distinct DNA sites. This is Interleukin-12 subunit alpha (IL12A) from Equus caballus (Horse).